Here is a 375-residue protein sequence, read N- to C-terminus: GDP-mannose-dependent alpha-mannosyltransferase (375 aa).

Belongs to the glycosyltransferase group 1 family. Glycosyltransferase 4 subfamily.

The protein operates within phospholipid metabolism; phosphatidylinositol metabolism. Functionally, catalyzes the addition of a mannose residue from GDP-D-mannose to GlcAGroAc2 to generate 1,2-di-O-C16/C18:1-(alpha-D-mannopyranosyl)-(1-4)-(alpha-D-glucopyranosyluronic acid)-(1-3)-glycerol(ManGlcAGroAc2). This chain is GDP-mannose-dependent alpha-mannosyltransferase (mgtA), found in Mycolicibacterium smegmatis (strain ATCC 700084 / mc(2)155) (Mycobacterium smegmatis).